We begin with the raw amino-acid sequence, 364 residues long: MSTTYNFCAGPAMLPQAVMKKAQSELLDWNGLGTSVMEISHRSKEFIALTDKAETDLRELMSIPENYHVLFMHGGGRGQFSAVVNNFLGENGKALYLVSGSWSKSAVDEARKLTSDAQIDTLDLVVNDNGIGAVSIPELTGEAADYRYLHYCPNETVDGIEIFEDINSPWPIVADMSSNIMSREIDVSKFGLIYAGAQKNIGPSGLSIVIVRDDMLELPSLPQSSIMDYRLAVKHGSMYNTPPTFAWYLAAEVFKWLKSSGGVATMAEVNAKKAQLLYDFIDGSNFYNNTVSAQNRSLMNVIFYLANEDNNADFLAEASRAGLVALKGHRSVGGMRASIYNAMPIEGVEKLVEFMKGFAEKNNG.

Position 42 (R42) interacts with L-glutamate. Residues 76–77 (GR), W102, T156, D175, and Q198 contribute to the pyridoxal 5'-phosphate site. An N6-(pyridoxal phosphate)lysine modification is found at K199. 240-241 (NT) serves as a coordination point for pyridoxal 5'-phosphate.

Belongs to the class-V pyridoxal-phosphate-dependent aminotransferase family. SerC subfamily. In terms of assembly, homodimer. The cofactor is pyridoxal 5'-phosphate.

It is found in the cytoplasm. It catalyses the reaction O-phospho-L-serine + 2-oxoglutarate = 3-phosphooxypyruvate + L-glutamate. The catalysed reaction is 4-(phosphooxy)-L-threonine + 2-oxoglutarate = (R)-3-hydroxy-2-oxo-4-phosphooxybutanoate + L-glutamate. Its pathway is amino-acid biosynthesis; L-serine biosynthesis; L-serine from 3-phospho-D-glycerate: step 2/3. It functions in the pathway cofactor biosynthesis; pyridoxine 5'-phosphate biosynthesis; pyridoxine 5'-phosphate from D-erythrose 4-phosphate: step 3/5. Its function is as follows. Catalyzes the reversible conversion of 3-phosphohydroxypyruvate to phosphoserine and of 3-hydroxy-2-oxo-4-phosphonooxybutanoate to phosphohydroxythreonine. The chain is Phosphoserine aminotransferase from Shewanella sediminis (strain HAW-EB3).